We begin with the raw amino-acid sequence, 151 residues long: MPRGSRSRTSRMAPPASRAPQMRAAPRPAPVAQPPAAAPPSAVGSSAAAPRQPGLMAQMATTAAGVAVGSAVGHTLGHAITGGFSGGSNAEPARPDITYQEPQGTQPAQQQQPCLYEIKQFLECAQNQGDIKLCEGFNEVLKQCRLANGLA.

Disordered stretches follow at residues 1–50 and 77–111; these read MPRG…AAAP and GHAITGGFSGGSNAEPARPDITYQEPQGTQPAQQQ. The segment covering 10 to 26 has biased composition (low complexity); it reads SRMAPPASRAPQMRAAP. The segment covering 27 to 38 has biased composition (pro residues); that stretch reads RPAPVAQPPAAA. Composition is skewed to low complexity over residues 39–50 and 100–111; these read PPSAVGSSAAAP and QEPQGTQPAQQQ. The 41-residue stretch at 111–151 folds into the CHCH domain; the sequence is QQPCLYEIKQFLECAQNQGDIKLCEGFNEVLKQCRLANGLA. 2 consecutive short sequence motifs (cx9C motif) follow at residues 114-124 and 134-144; these read CLYEIKQFLEC and CEGFNEVLKQC. 2 disulfide bridges follow: Cys114–Cys144 and Cys124–Cys134.

Interacts with RBPJ.

It is found in the nucleus. It localises to the mitochondrion. The protein resides in the mitochondrion intermembrane space. Its function is as follows. Transcription factor. Binds to the oxygen responsive element of COX4I2 and activates its transcription under hypoxia conditions (4% oxygen), as well as normoxia conditions (20% oxygen). The polypeptide is Coiled-coil-helix-coiled-coil-helix domain-containing protein 2 (CHCHD2) (Homo sapiens (Human)).